Here is a 343-residue protein sequence, read N- to C-terminus: Protein rax1 (343 aa).

Topologically, residues 1-235 are cytoplasmic; that stretch reads MASAPRVSEV…NLNPLTCTGR (235 aa). Positions 109–228 constitute an RGS domain; it reads ELSNEQTINS…LNHKFKHNLN (120 aa). Residues 236-256 form a helical membrane-spanning segment; that stretch reads FIIGYVSTFAAYWLGFCGIFL. Residues 257–263 are Extracellular-facing; the sequence is DYSRRKR. Residues 264 to 284 traverse the membrane as a helical segment; it reads VWTLLPFAFGFYNLICTWSKH. Residues 285-317 lie on the Cytoplasmic side of the membrane; sequence DPVLALLGYSEVKPFHYEKVLQPSIRLSLNRRA. A helical membrane pass occupies residues 318–338; it reads IFVLSIIVLIVGANTAIFSCV. Topologically, residues 339 to 343 are extracellular; sequence PSIRL.

It localises to the cell membrane. The protein resides in the endoplasmic reticulum membrane. In terms of biological role, may be involved in cell polarization and division. The protein is Protein rax1 (rax1) of Schizosaccharomyces pombe (strain 972 / ATCC 24843) (Fission yeast).